A 237-amino-acid polypeptide reads, in one-letter code: 2,3,4,5-tetrahydropyridine-2,6-dicarboxylate N-acetyltransferase (237 aa).

Belongs to the transferase hexapeptide repeat family. DapH subfamily.

The catalysed reaction is (S)-2,3,4,5-tetrahydrodipicolinate + acetyl-CoA + H2O = L-2-acetamido-6-oxoheptanedioate + CoA. It functions in the pathway amino-acid biosynthesis; L-lysine biosynthesis via DAP pathway; LL-2,6-diaminopimelate from (S)-tetrahydrodipicolinate (acetylase route): step 1/3. Functionally, catalyzes the transfer of an acetyl group from acetyl-CoA to tetrahydrodipicolinate. The sequence is that of 2,3,4,5-tetrahydropyridine-2,6-dicarboxylate N-acetyltransferase from Limosilactobacillus fermentum (strain NBRC 3956 / LMG 18251) (Lactobacillus fermentum).